The primary structure comprises 245 residues: MARRRRRHRGPRRPRPPGPTGAVPTAQSQVTSTPNSEPVVRSAPAAGGPPPSCSLLLRQWLHVPESASDDDDDDDWPDSPPPEPAPEARPTAAAPRPRSPPPGAGPGGGANPSHPPSRPFRLPPRLALRLRVTAEHLARLRLRRAGGEGAPKPPATPATPATPATPATPATPARVRFSPHVRVRHLVVWASAARLARRGSWARERADRARFRRRVAEAEAVIGPCLGPEARARALARGAGPANSV.

A compositionally biased stretch (basic residues) spans 1–15; the sequence is MARRRRRHRGPRRPR. Residues 1–17 are required for nucleolar localization; it reads MARRRRRHRGPRRPRPP. Disordered regions lie at residues 1–122 and 143–172; these read MARR…PFRL and RRAGGEGAPKPPATPATPATPATPATPATP. Residues 25 to 36 are compositionally biased toward polar residues; sequence TAQSQVTSTPNS. Residues 67-77 are compositionally biased toward acidic residues; the sequence is ASDDDDDDDWP. Composition is skewed to pro residues over residues 78–87 and 113–122; these read DSPPPEPAPE and SHPPSRPFRL. Residues 122 to 131 carry the Nuclear export signal motif; that stretch reads LPPRLALRLR. Repeat copies occupy residues 155 to 157, 158 to 160, 161 to 163, 164 to 166, 167 to 169, and 170 to 172. Positions 155 to 172 are 6 X 3 AA tandem repeats of A-T-P; sequence ATPATPATPATPATPATP. Residues 158-172 are compositionally biased toward low complexity; it reads ATPATPATPATPATP. Residues 172–185 are binding to PP1CA; it reads PARVRFSPHVRVRH. Positions 172-185 are interaction with host PPP1CA; the sequence is PARVRFSPHVRVRH. The important for interferon resistance stretch occupies residues 187–245; it reads VVWASAARLARRGSWARERADRARFRRRVAEAEAVIGPCLGPEARARALARGAGPANSV. Residues 197 to 215 carry the Bipartite nuclear localization signal motif; the sequence is RRGSWARERADRARFRRRV. Positions 215-230 are interaction with host EIF2S1/EIF-2ALPHA; that stretch reads VAEAEAVIGPCLGPEA.

This sequence belongs to the PPP1R15 family. In terms of assembly, interacts with host PPP1CA to form a high-molecular-weight complex that dephosphorylates EIF2S1/eIF-2alpha. Interacts with host EIF2S1/eIF-2alpha; this interaction is crucial for the specific dephosphorylation of EIF2S1/eIF-2alpha by PPP1CA. Binds to proliferating cell nuclear antigen (PCNA), which may release host cells from growth arrest and facilitate viral replication. Interacts (via N-terminus) with host C1QBP and PRKCA. Interacts with protein UL31. Interacts with host TBK1. Interacts with host STING/TMEM173; this interaction inhibits the intracellular DNA sensing pathway. Interacts with host BECN1; this interaction modulates host autophagy.

It localises to the host cytoplasm. Its subcellular location is the host nucleus. It is found in the host nucleolus. The protein localises to the virion. Inhibits the establishment of the immune response and of the integrated stress response (ISR) in the infected cell. Plays essential roles in viral nuclear egress to mediate capsid transit across the nuclear membrane. Facilitates nuclear egress cooperatively with host C1QBP and protein kinase C/PKC to induce lamin A/C phosphorylation and subsequent reorganization. In turn, lamina disassembles and nuclear egress occurs. Recruits the serine/threonine protein phosphatase PPP1CA/PP1-alpha to dephosphorylate the translation initiation factor EIF2S1/eIF-2alpha, thereby couteracting the host shutoff of protein synthesis involving double-stranded RNA-dependent protein kinase EIF2AK2/PKR. In turn, controls host IRF3 activation and subsequently inhibits host interferon response. Controls the DNA sensing pathway by interacting with and inhibiting host STING/TMEM173. Also down-modulates the host MHC class II proteins cell surface expression. Acts as a neurovirulence factor that has a profound effect on the growth of the virus in central nervous system tissue, by interacting with host BECN1 and thereby antagonizing the host autophagy response. This Homo sapiens (Human) protein is Neurovirulence factor ICP34.5 (RL1).